A 440-amino-acid chain; its full sequence is Tubby-like F-box protein 13 (440 aa).

Residues 51 to 106 (SCWASLPPELLRDIIERLEESEATWPSRKHVVACAGVCRTWREMCKEIVKNPELCG) form the F-box domain.

The protein belongs to the TUB family. Ubiquitous.

The sequence is that of Tubby-like F-box protein 13 (TULP13) from Oryza sativa subsp. japonica (Rice).